The sequence spans 242 residues: GLIPR1-like protein 1 (242 aa).

A signal peptide spans 1-22; the sequence is MALKNKFSCLWILGLCLVATTS. One can recognise an SCP domain in the interval 39 to 171; it reads EAHNEWRGKV…ASTAIFVCNY (133 aa). Asn119 carries N-linked (GlcNAc...) asparagine glycosylation. Gly221 carries the GPI-anchor amidated glycine lipid modification. A propeptide spans 222–242 (removed in mature form); that stretch reads RAPQQTAFNPFSLGFLLLRIF.

The protein belongs to the CRISP family. In terms of assembly, part of a oolemmal binding multimeric complex (IZUMO1 complex) composed at least of IZUMO1 and GLIPR1L1; the complex assemblage is influenced by the maturation status of the male germ cell. Interacts with IZUMO1. N-glycosylated. N-glycosylation decreases during the transit in the caput. As to expression, highly expressed in testis.

It is found in the cytoplasmic vesicle. The protein resides in the secretory vesicle. It localises to the acrosome. The protein localises to the cell membrane. Its subcellular location is the membrane raft. It is found in the secreted. Its function is as follows. Required for optimal fertilization at the stage of sperm-oocyte fusion, plays a role in optimizing acrosome function, the translocation of IZUMO1 during the acrosome reaction and the fertilization process. Component of epididymosomes, one type of membranous microvesicules which mediate the transfer of lipids and proteins to spermatozoa plasma membrane during epididymal maturation. Also component of the CD9-positive microvesicules found in the cauda region. In Homo sapiens (Human), this protein is GLIPR1-like protein 1 (GLIPR1L1).